A 148-amino-acid polypeptide reads, in one-letter code: Lysozyme C-1 (148 aa).

The N-terminal stretch at 1-18 (MKALLTLGLLLLSVTAQA) is a signal peptide. In terms of domain architecture, C-type lysozyme spans 19–148 (KVYNRCELAR…LSQYIRNCGV (130 aa)). Cystine bridges form between Cys-24-Cys-146, Cys-48-Cys-134, Cys-83-Cys-99, and Cys-95-Cys-113. Catalysis depends on residues Glu-53 and Asp-71.

The protein belongs to the glycosyl hydrolase 22 family. In terms of assembly, monomer. As to expression, expressed strongly only in small intestine.

Its subcellular location is the secreted. It catalyses the reaction Hydrolysis of (1-&gt;4)-beta-linkages between N-acetylmuramic acid and N-acetyl-D-glucosamine residues in a peptidoglycan and between N-acetyl-D-glucosamine residues in chitodextrins.. Functionally, lysozymes have primarily a bacteriolytic function; those in tissues and body fluids are associated with the monocyte-macrophage system and enhance the activity of immunoagents. Lyz1 is active against a range of Gram-positive and Gram-negative bacteria. Less effective than Lyz2 in killing Gram-negative bacteria. Lyz1 and Lyz2 are equally effective in killing Gram-positive bacteria. This Mus musculus (Mouse) protein is Lysozyme C-1 (Lyz1).